A 277-amino-acid chain; its full sequence is Adenylate kinase (277 aa).

53-58 is a binding site for ATP; sequence GAGKGT. Residues 73–102 form an NMP region; the sequence is ATGDMLRAQVAAKTPLGREAKKIMDAGGLV. Residues Thr-74, Arg-79, 100-102, 129-132, and Gln-136 each bind AMP; these read GLV and GFPR. Positions 170–207 are LID; it reads GRLVHPASGRSYHKIFNPPKAPMTDDATGEPLIQRSDD. ATP contacts are provided by residues Arg-171 and 180–181; that span reads SY. Residues Arg-204 and Arg-215 each contribute to the AMP site. Residue Gln-243 coordinates ATP.

Belongs to the adenylate kinase family. AK2 subfamily. As to quaternary structure, monomer.

It is found in the cytoplasm. The protein resides in the cytosol. Its subcellular location is the mitochondrion intermembrane space. It catalyses the reaction AMP + ATP = 2 ADP. Its function is as follows. Catalyzes the reversible transfer of the terminal phosphate group between ATP and AMP. Plays an important role in cellular energy homeostasis and in adenine nucleotide metabolism. Adenylate kinase activity is critical for regulation of the phosphate utilization and the AMP de novo biosynthesis pathways. The protein is Adenylate kinase of Phaeosphaeria nodorum (strain SN15 / ATCC MYA-4574 / FGSC 10173) (Glume blotch fungus).